The primary structure comprises 330 residues: Ketol-acid reductoisomerase (NADP(+)) (330 aa).

The region spanning 3-184 (LPVYYDKDID…GGGRMGVLET (182 aa)) is the KARI N-terminal Rossmann domain. Residues 26–29 (YGVQ), Ser-52, and Ser-54 each bind NADP(+). His-109 is a catalytic residue. An NADP(+)-binding site is contributed by Gly-135. Residues 185 to 329 (SFKEECESDL…EILRAPFNHK (145 aa)) enclose the KARI C-terminal knotted domain. Asp-193, Glu-197, Glu-229, and Glu-233 together coordinate Mg(2+). Substrate is bound at residue Ser-254.

The protein belongs to the ketol-acid reductoisomerase family. The cofactor is Mg(2+).

It carries out the reaction (2R)-2,3-dihydroxy-3-methylbutanoate + NADP(+) = (2S)-2-acetolactate + NADPH + H(+). The enzyme catalyses (2R,3R)-2,3-dihydroxy-3-methylpentanoate + NADP(+) = (S)-2-ethyl-2-hydroxy-3-oxobutanoate + NADPH + H(+). Its pathway is amino-acid biosynthesis; L-isoleucine biosynthesis; L-isoleucine from 2-oxobutanoate: step 2/4. It participates in amino-acid biosynthesis; L-valine biosynthesis; L-valine from pyruvate: step 2/4. Functionally, involved in the biosynthesis of branched-chain amino acids (BCAA). Catalyzes an alkyl-migration followed by a ketol-acid reduction of (S)-2-acetolactate (S2AL) to yield (R)-2,3-dihydroxy-isovalerate. In the isomerase reaction, S2AL is rearranged via a Mg-dependent methyl migration to produce 3-hydroxy-3-methyl-2-ketobutyrate (HMKB). In the reductase reaction, this 2-ketoacid undergoes a metal-dependent reduction by NADPH to yield (R)-2,3-dihydroxy-isovalerate. The sequence is that of Ketol-acid reductoisomerase (NADP(+)) from Helicobacter pylori (strain J99 / ATCC 700824) (Campylobacter pylori J99).